The following is a 594-amino-acid chain: Golgi-associated RAB2 interactor protein 4 (594 aa).

Residues Met-387–Gly-524 are disordered. Residues Ser-396–Gly-406 are compositionally biased toward polar residues. 3 stretches are compositionally biased toward basic and acidic residues: residues His-408–Leu-433, Thr-442–Ala-455, and Ala-468–Gly-477. Residues Ser-511–Ser-520 show a composition bias toward polar residues.

This sequence belongs to the GARIN family. As to quaternary structure, interacts (via N-terminus) with RAB2B (in GTP-bound form).

It localises to the golgi apparatus. Its function is as follows. RAB2B effector protein required for the compacted Golgi morphology, probably through interaction with small GTPase RAB2B. This is Golgi-associated RAB2 interactor protein 4 from Homo sapiens (Human).